We begin with the raw amino-acid sequence, 312 residues long: Pyrimidine-specific ribonucleoside hydrolase RihA (312 aa).

Residue His-240 is part of the active site.

Belongs to the IUNH family. RihA subfamily.

Its function is as follows. Hydrolyzes cytidine or uridine to ribose and cytosine or uracil, respectively. In Citrobacter koseri (strain ATCC BAA-895 / CDC 4225-83 / SGSC4696), this protein is Pyrimidine-specific ribonucleoside hydrolase RihA.